The primary structure comprises 561 residues: Septation ring formation regulator EzrA (561 aa).

Over 1–3 the chain is Extracellular; the sequence is MWI. Residues 4-22 traverse the membrane as a helical segment; sequence VVFSLLVLTVTFFVYGALR. Residues 23 to 561 are Cytoplasmic-facing; sequence RKAFYKRVDK…VLEKVQHLAG (539 aa). Coiled coils occupy residues 98-130, 166-214, and 251-465; these read RFQK…IQVL, AKVF…HLLK, and FAID…KLSD.

It belongs to the EzrA family.

The protein resides in the cell membrane. Its function is as follows. Negative regulator of FtsZ ring formation; modulates the frequency and position of FtsZ ring formation. Inhibits FtsZ ring formation at polar sites. Interacts either with FtsZ or with one of its binding partners to promote depolymerization. This is Septation ring formation regulator EzrA from Halalkalibacterium halodurans (strain ATCC BAA-125 / DSM 18197 / FERM 7344 / JCM 9153 / C-125) (Bacillus halodurans).